Consider the following 101-residue polypeptide: NADH-quinone oxidoreductase subunit K 1 (101 aa).

Helical transmembrane passes span 4 to 24 (IGTM…TVGV), 31 to 51 (VVIL…LVAF), and 64 to 84 (IFVM…VIAF).

This sequence belongs to the complex I subunit 4L family. As to quaternary structure, NDH-1 is composed of 14 different subunits. Subunits NuoA, H, J, K, L, M, N constitute the membrane sector of the complex.

The protein resides in the cell inner membrane. It catalyses the reaction a quinone + NADH + 5 H(+)(in) = a quinol + NAD(+) + 4 H(+)(out). Its function is as follows. NDH-1 shuttles electrons from NADH, via FMN and iron-sulfur (Fe-S) centers, to quinones in the respiratory chain. The immediate electron acceptor for the enzyme in this species is believed to be ubiquinone. Couples the redox reaction to proton translocation (for every two electrons transferred, four hydrogen ions are translocated across the cytoplasmic membrane), and thus conserves the redox energy in a proton gradient. The protein is NADH-quinone oxidoreductase subunit K 1 of Koribacter versatilis (strain Ellin345).